The sequence spans 136 residues: MQNAEIFYKACKNAFTRKEYIFPSGRKEFVLGYEDKCLDCLLEIYCEDDIIVDPRLIPTFKYEKLRDDGTIYSAKYFPDVLIVNDHGNYFIEVKSEWTYKIDTVNIHKKIKSVTESGYDIELWIYNSKKNSKKRTF.

This is an uncharacterized protein from Acheta domesticus (House cricket).